Reading from the N-terminus, the 561-residue chain is MPESKYRQQTIRAPRGTVLTAKSWLTEAPLRMLMNNLDPDVAENPHELVVYGGIGRAARNWECYDAIVDALTRLEADETLLIQSGKPVGVFKTHDNAPRVLIANSNLVPHWATWEHFNELDAKGLAMYGQMTAGSWIYIGSQGIVQGTYETFVEAGRQHYNGTLAGRWALTAGLGGMGGAQPLAATLAGACSLTIECQQSRIDFRLRTRYVDEQAATLDDALARITRYTREGKAVSVALCANAADILPELVNRGVRPDLVTDQTSAHDPLHGYLPSGWCWEEYQKNAQSDPRGTMQAAKRSMAAHVRAMLAFSKMGVPTFDYGNNIRQMAKEMGVENAFDFPGFVPAYIRPLFCRGIGPFRWVALSGDPQDIYKTDAKVKEIVAEDKHLHHWLDMARERIHFQGLPARICWVGLEWRQKLGLAFNEMVRCGEVSAPIVIGRDHLDSGSVASPNRETEAMRDGSDAVSDWPLLNALLNTASGATWVSLHHGGGVGMGFSQHAGMVIVCDGTDEAAARIRRVLHNDPATGVMRHADAGYDLAVECAVEQGLNLPMVAATQGKG.

NAD(+)-binding positions include Gly52–Gly53, Gln130, Gly176–Gly178, Glu196, Arg201, Asn242–Ala243, Gln263–His267, Tyr273–Leu274, and Tyr322. Cys410 is a catalytic residue. An NAD(+)-binding site is contributed by Gly492.

It belongs to the urocanase family. Requires NAD(+) as cofactor.

It is found in the cytoplasm. It carries out the reaction 4-imidazolone-5-propanoate = trans-urocanate + H2O. It participates in amino-acid degradation; L-histidine degradation into L-glutamate; N-formimidoyl-L-glutamate from L-histidine: step 2/3. In terms of biological role, catalyzes the conversion of urocanate to 4-imidazolone-5-propionate. This Salmonella typhi protein is Urocanate hydratase.